The chain runs to 121 residues: Large ribosomal subunit protein uL14 (121 aa).

The protein belongs to the universal ribosomal protein uL14 family. As to quaternary structure, part of the 50S ribosomal subunit. Forms a cluster with proteins L3 and L19. In the 70S ribosome, L14 and L19 interact and together make contacts with the 16S rRNA in bridges B5 and B8.

Functionally, binds to 23S rRNA. Forms part of two intersubunit bridges in the 70S ribosome. This chain is Large ribosomal subunit protein uL14, found in Azobacteroides pseudotrichonymphae genomovar. CFP2.